An 860-amino-acid chain; its full sequence is Leucine--tRNA ligase (860 aa).

Residues 42–52 (PYPSGRLHMGH) carry the 'HIGH' region motif. Residues 619-623 (KMSKS) carry the 'KMSKS' region motif. Residue lysine 622 coordinates ATP.

Belongs to the class-I aminoacyl-tRNA synthetase family.

It is found in the cytoplasm. The enzyme catalyses tRNA(Leu) + L-leucine + ATP = L-leucyl-tRNA(Leu) + AMP + diphosphate. In Actinobacillus succinogenes (strain ATCC 55618 / DSM 22257 / CCUG 43843 / 130Z), this protein is Leucine--tRNA ligase.